Reading from the N-terminus, the 152-residue chain is D-aminoacyl-tRNA deacylase (152 aa).

The Gly-cisPro motif, important for rejection of L-amino acids signature appears at 137–138; it reads GP.

This sequence belongs to the DTD family. Homodimer.

Its subcellular location is the cytoplasm. The catalysed reaction is glycyl-tRNA(Ala) + H2O = tRNA(Ala) + glycine + H(+). It catalyses the reaction a D-aminoacyl-tRNA + H2O = a tRNA + a D-alpha-amino acid + H(+). Its function is as follows. An aminoacyl-tRNA editing enzyme that deacylates mischarged D-aminoacyl-tRNAs. Also deacylates mischarged glycyl-tRNA(Ala), protecting cells against glycine mischarging by AlaRS. Acts via tRNA-based rather than protein-based catalysis; rejects L-amino acids rather than detecting D-amino acids in the active site. By recycling D-aminoacyl-tRNA to D-amino acids and free tRNA molecules, this enzyme counteracts the toxicity associated with the formation of D-aminoacyl-tRNA entities in vivo and helps enforce protein L-homochirality. This Geobacillus sp. (strain WCH70) protein is D-aminoacyl-tRNA deacylase.